An 822-amino-acid polypeptide reads, in one-letter code: MDHSDVYEPYTFSGKHHVRMYDFSKLTPMWNKDASTPPRKFADMHIASTVAMELYNIERELLNMGHLSGMETMMVDVRKSPEMIPSTINMRDHITRLVNKMKPICRFDERLYSLCGELVHLRIELREVPLDTWLLSKKLNLKYEVVDNIRRYRAHIEMDMLRFYGSIHPWLKRLGLQSALKYEEYLVELEDGKKESLCQFFVRLAAAAATEASMKKPFMTTLTTGVANWRTTFTTFFLALANQLFVPSTPCMLFLGREGTSTASCYLMDPRTNNTQDTLKAITEDVVPHLLARGGIGISLQHLNGKFGLMHVMKVLDSLVMAANVNESRPTGICVYLEPWHADIMSALNMRGMVAAEESRRCDNVFLALWSCDLLFKRYLRHVNGEKNVIWTLFDSRASILTKLHSEEFEKEYERLESEGLGVASIPIRDMMFAIIKSAASTGSPFILFKDACNRHYITNTQGDAIAGSNLCTEIIQKTDANTNGVCSLASINLARCVRNIDGNRQFDFDALRYAVRLATVFVNAIMEGSDVPTEKSHSGRERNRSMGIGVQGFHTAFLSMGLDLCDERARSLNKLIFEFMLLEAMTVSCEFCERGLPPFADFSNSYYARGRLHFDGWANVELAAVEEWNMLRDRIVSAGLYNAQFIALMPTAASAQVTEVSEGFSPLFSNMFSKVTSTGELLRPNIQLMEELRTIYLDNENQRLATIAALESANWNIQTALGNKPECHSLLKYKTAFDYDQALLIDLCSDRAPFVDQSQSMTLFITETADGTLLASRVMNLLLHAYKAGLKTGMYYCKIRKATNAGVFCGDGELTCSSCVL.

Substrate contacts are provided by residues Thr-249, 264–265, Gly-295, 470–474, and 651–655; these read SC, NLCTE, and PTAAS. Cys-265 and Cys-487 are oxidised to a cystine. Residue Asn-470 is the Proton acceptor of the active site. Catalysis depends on Cys-472, which acts as the Cysteine radical intermediate. The active-site Proton acceptor is the Glu-474.

It belongs to the ribonucleoside diphosphate reductase large chain family. As to quaternary structure, heterotetramer composed of a homodimer of the large subunit (R1) and a homodimer of the small subunit (R2). Larger multisubunit protein complex are also active, composed of (R1)n(R2)n.

It carries out the reaction a 2'-deoxyribonucleoside 5'-diphosphate + [thioredoxin]-disulfide + H2O = a ribonucleoside 5'-diphosphate + [thioredoxin]-dithiol. In terms of biological role, ribonucleoside-diphosphate reductase holoenzyme provides the precursors necessary for viral DNA synthesis. Allows virus growth in non-dividing cells, as well as reactivation from latency in infected hosts. Catalyzes the biosynthesis of deoxyribonucleotides from the corresponding ribonucleotides. The polypeptide is Ribonucleoside-diphosphate reductase large subunit (Gallus gallus (Chicken)).